Consider the following 204-residue polypeptide: GTP cyclohydrolase 1 (204 aa).

Residues Cys92, His95, and Cys165 each coordinate Zn(2+).

It belongs to the GTP cyclohydrolase I family. As to quaternary structure, homomer.

The catalysed reaction is GTP + H2O = 7,8-dihydroneopterin 3'-triphosphate + formate + H(+). It participates in cofactor biosynthesis; 7,8-dihydroneopterin triphosphate biosynthesis; 7,8-dihydroneopterin triphosphate from GTP: step 1/1. The sequence is that of GTP cyclohydrolase 1 from Mycobacterium avium (strain 104).